A 420-amino-acid polypeptide reads, in one-letter code: G2/mitotic-specific cyclin-A (420 aa).

The tract at residues 64-93 (VQGSRIQPTRAAKEKLKPPQNISDSQLVND) is disordered. The segment covering 83–93 (QNISDSQLVND) has biased composition (polar residues).

It belongs to the cyclin family. Cyclin AB subfamily.

Its function is as follows. Essential for the control of the cell cycle at the G2/M (mitosis) transition. Interacts with the CDC2 and CDK2 protein kinases to form MPF. G2/M cyclins accumulate steadily during G2 and are abruptly destroyed at mitosis. This chain is G2/mitotic-specific cyclin-A, found in Hydra viridissima (Green hydra).